A 106-amino-acid polypeptide reads, in one-letter code: MLKVRKDDEVVVLAGKDKGKRGKVLKVLREDSRVLVEKVNMIKRHVRPDRMGKAGGIVEKEAPIHVSNVAIFNAATGGGDRIGYKVLEDGQKVRVFKSNGEVIGRR.

This sequence belongs to the universal ribosomal protein uL24 family. Part of the 50S ribosomal subunit.

One of two assembly initiator proteins, it binds directly to the 5'-end of the 23S rRNA, where it nucleates assembly of the 50S subunit. Functionally, one of the proteins that surrounds the polypeptide exit tunnel on the outside of the subunit. The chain is Large ribosomal subunit protein uL24 from Acidithiobacillus ferrooxidans (strain ATCC 53993 / BNL-5-31) (Leptospirillum ferrooxidans (ATCC 53993)).